A 289-amino-acid polypeptide reads, in one-letter code: 4-hydroxy-3-methylbut-2-enyl diphosphate reductase (289 aa).

Cysteine 13 provides a ligand contact to [4Fe-4S] cluster. The (2E)-4-hydroxy-3-methylbut-2-enyl diphosphate site is built by histidine 41 and histidine 75. Dimethylallyl diphosphate-binding residues include histidine 41 and histidine 75. Isopentenyl diphosphate contacts are provided by histidine 41 and histidine 75. Cysteine 97 contributes to the [4Fe-4S] cluster binding site. Histidine 129 serves as a coordination point for (2E)-4-hydroxy-3-methylbut-2-enyl diphosphate. Histidine 129 is a dimethylallyl diphosphate binding site. Residue histidine 129 participates in isopentenyl diphosphate binding. The Proton donor role is filled by glutamate 131. Threonine 167 is a binding site for (2E)-4-hydroxy-3-methylbut-2-enyl diphosphate. Position 198 (cysteine 198) interacts with [4Fe-4S] cluster. Residues serine 226, serine 227, asparagine 228, and serine 270 each coordinate (2E)-4-hydroxy-3-methylbut-2-enyl diphosphate. Dimethylallyl diphosphate is bound by residues serine 226, serine 227, asparagine 228, and serine 270. The isopentenyl diphosphate site is built by serine 226, serine 227, asparagine 228, and serine 270.

It belongs to the IspH family. It depends on [4Fe-4S] cluster as a cofactor.

The enzyme catalyses isopentenyl diphosphate + 2 oxidized [2Fe-2S]-[ferredoxin] + H2O = (2E)-4-hydroxy-3-methylbut-2-enyl diphosphate + 2 reduced [2Fe-2S]-[ferredoxin] + 2 H(+). The catalysed reaction is dimethylallyl diphosphate + 2 oxidized [2Fe-2S]-[ferredoxin] + H2O = (2E)-4-hydroxy-3-methylbut-2-enyl diphosphate + 2 reduced [2Fe-2S]-[ferredoxin] + 2 H(+). It functions in the pathway isoprenoid biosynthesis; dimethylallyl diphosphate biosynthesis; dimethylallyl diphosphate from (2E)-4-hydroxy-3-methylbutenyl diphosphate: step 1/1. The protein operates within isoprenoid biosynthesis; isopentenyl diphosphate biosynthesis via DXP pathway; isopentenyl diphosphate from 1-deoxy-D-xylulose 5-phosphate: step 6/6. Its function is as follows. Catalyzes the conversion of 1-hydroxy-2-methyl-2-(E)-butenyl 4-diphosphate (HMBPP) into a mixture of isopentenyl diphosphate (IPP) and dimethylallyl diphosphate (DMAPP). Acts in the terminal step of the DOXP/MEP pathway for isoprenoid precursor biosynthesis. The protein is 4-hydroxy-3-methylbut-2-enyl diphosphate reductase of Bacteroides thetaiotaomicron (strain ATCC 29148 / DSM 2079 / JCM 5827 / CCUG 10774 / NCTC 10582 / VPI-5482 / E50).